The chain runs to 291 residues: uncharacterized protein (291 aa).

The protein belongs to the PhyH family.

This is an uncharacterized protein from Mycobacterium bovis (strain ATCC BAA-935 / AF2122/97).